The primary structure comprises 636 residues: Chaperone protein HtpG (636 aa).

The tract at residues 1–344 (MTMSVETQKE…SNDLSLNVSR (344 aa)) is a; substrate-binding. The tract at residues 345 to 561 (EILQKDPIID…EQDLGMQMRQ (217 aa)) is b. The c stretch occupies residues 562–636 (ILEASGQKVP…LNKLLVELSV (75 aa)).

It belongs to the heat shock protein 90 family. In terms of assembly, homodimer.

It is found in the cytoplasm. Functionally, molecular chaperone. Has ATPase activity. This chain is Chaperone protein HtpG, found in Pseudomonas fluorescens (strain SBW25).